The following is a 110-amino-acid chain: Protein YcgL (110 aa).

A YcgL domain is found at 14-98 (MFCVIYRSSK…PPEDLLKQHL (85 aa)). The disordered stretch occupies residues 87-110 (PPPPEDLLKQHLSSVGQNTSSADR). Over residues 97–110 (HLSSVGQNTSSADR) the composition is skewed to polar residues.

This Salmonella newport (strain SL254) protein is Protein YcgL.